Here is a 630-residue protein sequence, read N- to C-terminus: Chaperone protein HtpG (630 aa).

The a; substrate-binding stretch occupies residues 1-341; sequence MTQNATSETL…SADLPLNVSR (341 aa). The b stretch occupies residues 342 to 558; it reads EILQESRDVR…QNDLSPHLLR (217 aa). The interval 559–630 is c; the sequence is MLKAAGQEVP…KRLNALLLKV (72 aa).

It belongs to the heat shock protein 90 family. In terms of assembly, homodimer.

The protein resides in the cytoplasm. In terms of biological role, molecular chaperone. Has ATPase activity. The chain is Chaperone protein HtpG from Bordetella avium (strain 197N).